The chain runs to 471 residues: Pancreatic lipase-related protein 2 (471 aa).

The signal sequence occupies residues 1–17 (MLPSWTIGLLLLATVRG). Cysteines 21 and 27 form a disulfide. N-linked (GlcNAc...) asparagine glycosylation is present at N71. Residues 93–105 (IHGFIDKGEDSWP) are required for galactolipase activity. Residues C109 and C120 are joined by a disulfide bond. The Nucleophile role is filled by S171. The active-site Charge relay system is D195. Ca(2+) contacts are provided by E206, R209, D211, and D214. The cysteines at positions 256 and 280 are disulfide-linked. Positions 257-279 (QKNTLSTIVDVDGIWEGIEDFAA) are required for galactolipase activity. H282 acts as the Charge relay system in catalysis. 2 disulfides stabilise this stretch: C304–C317 and C320–C325. N-linked (GlcNAc...) asparagine glycosylation occurs at N355. Residues 359–471 (WRYRVSVTLA…ENILQTLNPC (113 aa)) form the PLAT domain. C455 and C471 are oxidised to a cystine.

This sequence belongs to the AB hydrolase superfamily. Lipase family.

The protein resides in the secreted. It localises to the zymogen granule membrane. The protein localises to the cell projection. It is found in the neuron projection. The enzyme catalyses a triacylglycerol + H2O = a diacylglycerol + a fatty acid + H(+). The catalysed reaction is a 1,2-diacyl-3-O-(beta-D-galactosyl)-sn-glycerol + 2 H2O = 3-beta-D-galactosyl-sn-glycerol + 2 a fatty acid + 2 H(+). It catalyses the reaction 1,2,3-tri-(9Z-octadecenoyl)-glycerol + H2O = di-(9Z)-octadecenoylglycerol + (9Z)-octadecenoate + H(+). It carries out the reaction di-(9Z)-octadecenoylglycerol + H2O = (9Z-octadecenoyl)-glycerol + (9Z)-octadecenoate + H(+). The enzyme catalyses (9Z-octadecenoyl)-glycerol + H2O = glycerol + (9Z)-octadecenoate + H(+). The catalysed reaction is 1-(9Z-octadecenoyl)-glycerol + H2O = glycerol + (9Z)-octadecenoate + H(+). It catalyses the reaction 1,2,3-tripropanoylglycerol + H2O = dipropanoylglycerol + propanoate + H(+). It carries out the reaction 1,2,3-tributanoylglycerol + H2O = dibutanoylglycerol + butanoate + H(+). The enzyme catalyses 1,2,3-trioctanoylglycerol + H2O = dioctanoylglycerol + octanoate + H(+). The catalysed reaction is 1,2-didecanoylglycerol + H2O = decanoylglycerol + decanoate + H(+). It catalyses the reaction long chain 1,2-diacyl-3-O-beta-D-galactosyl-sn-glycerol + H2O = long chain acyl-3-O-beta-D-galactosyl-sn-glycerol + a fatty acid + H(+). It carries out the reaction 1,2-dioctanoyl-3-O-beta-D-galactosyl-sn-glycerol + H2O = octanoyl-3-(beta-D-galactosyl)-sn-glycerol + octanoate + H(+). The enzyme catalyses 1,2-didodecanoyl-3-beta-D-galactosyl-sn-glycerol + H2O = dodecanoyl-3-beta-D-galactosyl-sn-glycerol + dodecanoate + H(+). The catalysed reaction is 1-beta-D-galactosyl-2,3-didodecanoyl-sn-glycerol + H2O = 1-beta-D-galactosyl-dodecanoyl-sn-glycerol + dodecanoate + H(+). It catalyses the reaction a 1,2-diacyl-3-O-[alpha-D-galactosyl-(1-&gt;6)-beta-D-galactosyl]-sn-glycerol + H2O = acyl-3-O-[alpha-D-galactosyl-(1-&gt;6)-beta-D-galactosyl]-sn-glycerol + a fatty acid + H(+). It carries out the reaction long chain 1,2-diacyl-3-O-[alpha-D-galactosyl-(1-&gt;6)-beta-D-galactosyl]-sn-glycerol + H2O = long chain acyl-3-O-[alpha-D-galactosyl-(1-&gt;6)-beta-D-galactosyl]-sn-glycerol + a fatty acid + H(+). The enzyme catalyses 1,2-dioctanoyl-3-O-[alpha-D-galactosyl-(1-&gt;6)-beta-D-galactosyl]-sn-glycerol + H2O = octanoyl-3-O-[alpha-D-galactosyl-(1-&gt;6)-beta-D-galactosyl]-sn-glycerol + octanoate + H(+). The catalysed reaction is 1,2-didodecanoyl-3-O-[alpha-D-galactosyl-(1-&gt;6)-beta-D-galactosyl]-sn-glycerol + H2O = dodecanoyl-3-O-[alpha-D-galactosyl-(1-&gt;6)-beta-D-galactosyl]-sn-glycerol + dodecanoate + H(+). It catalyses the reaction a 1,2-diacyl-sn-glycero-3-phosphocholine + H2O = a monoacyl-sn-glycero-3-phosphocholine + a fatty acid + H(+). Its pathway is glycerolipid metabolism; triacylglycerol degradation. The protein operates within glycolipid metabolism. Up-regulated by CLPS in the presence of increasing concentrations of bile salts. In terms of biological role, lipase that primarily hydrolyzes triglycerides and galactosylglycerides. In neonates, may play a major role in pancreatic digestion of dietary fats such as milk fat globules enriched in long-chain triglycerides. Hydrolyzes short-, medium- and long-chain fatty acyls in triglycerides without apparent positional specificity. Can completely deacylate triacylglycerols. When the liver matures and bile salt synthesis increases, likely functions mainly as a galactolipase and monoacylglycerol lipase. Hydrolyzes monogalactosyldiglycerols (MGDG) and digalactosyldiacylglycerols (DGDG) present in a plant-based diet, releasing long-chain polyunsaturated fatty acids. Hydrolyzes medium- and long-chain fatty acyls in galactolipids. May act together with LIPF to hydrolyze partially digested triglycerides. Hydrolyzes long-chain monoglycerides with high efficiency. In cytotoxic T cells, contributes to perforin-dependent cell lysis, but is unlikely to mediate direct cytotoxicity. Also has low phospholipase activity. In neurons, required for the localization of the phospholipid 1-oleoyl-2-palmitoyl-PC (OPPC) to neurite tips through acyl chain remodeling of membrane phospholipids. The resulting OPPC-rich lipid membrane domain recruits the t-SNARE protein STX4 by selectively interacting with the STX4 transmembrane domain and this promotes surface expression of the dopamine transporter SLC6A3/DAT at neurite tips by facilitating fusion of SLC6A3-containing transport vesicles with the plasma membrane. This Sus scrofa (Pig) protein is Pancreatic lipase-related protein 2 (PNLIPRP2).